We begin with the raw amino-acid sequence, 586 residues long: Switch-associated protein 70 (586 aa).

Positions D210–S306 constitute a PH domain. A coiled-coil region spans residues H316–V538.

The SWAP complex consists of NPM1, NCL, PARP1 and SWAP70. Tyrosine-phosphorylated.

Its subcellular location is the cytoplasm. The protein localises to the cell membrane. It localises to the nucleus. It is found in the cell projection. The protein resides in the lamellipodium. Its function is as follows. Phosphatidylinositol 3,4,5-trisphosphate-dependent guanine nucleotide exchange factor (GEF) which, independently of RAS, transduces signals from tyrosine kinase receptors to RAC. It also mediates signaling of membrane ruffling. Regulates the actin cytoskeleton as an effector or adapter protein in response to agonist stimulated phosphatidylinositol (3,4)-bisphosphate production and cell protrusion. This Gallus gallus (Chicken) protein is Switch-associated protein 70 (SWAP70).